The following is a 237-amino-acid chain: 7-cyano-7-deazaguanine synthase (237 aa).

Residue 14–24 participates in ATP binding; that stretch reads FSGGQDSATCL. 4 residues coordinate Zn(2+): C202, C217, C220, and C223.

This sequence belongs to the QueC family. Requires Zn(2+) as cofactor.

The enzyme catalyses 7-carboxy-7-deazaguanine + NH4(+) + ATP = 7-cyano-7-deazaguanine + ADP + phosphate + H2O + H(+). It participates in purine metabolism; 7-cyano-7-deazaguanine biosynthesis. Functionally, catalyzes the ATP-dependent conversion of 7-carboxy-7-deazaguanine (CDG) to 7-cyano-7-deazaguanine (preQ(0)). The protein is 7-cyano-7-deazaguanine synthase of Rhodopseudomonas palustris (strain TIE-1).